A 339-amino-acid polypeptide reads, in one-letter code: Protein-glutamate methylesterase/protein-glutamine glutaminase 3 (339 aa).

Residues asparagine 2 to alanine 119 form the Response regulatory domain. Aspartate 53 carries the post-translational modification 4-aspartylphosphate. The CheB-type methylesterase domain occupies proline 141–threonine 336. Active-site residues include serine 158, histidine 185, and aspartate 278.

The protein belongs to the CheB family. Phosphorylated by CheA. Phosphorylation of the N-terminal regulatory domain activates the methylesterase activity.

The protein localises to the cytoplasm. It catalyses the reaction [protein]-L-glutamate 5-O-methyl ester + H2O = L-glutamyl-[protein] + methanol + H(+). The catalysed reaction is L-glutaminyl-[protein] + H2O = L-glutamyl-[protein] + NH4(+). Involved in chemotaxis. Part of a chemotaxis signal transduction system that modulates chemotaxis in response to various stimuli. Catalyzes the demethylation of specific methylglutamate residues introduced into the chemoreceptors (methyl-accepting chemotaxis proteins or MCP) by CheR. Also mediates the irreversible deamidation of specific glutamine residues to glutamic acid. This Burkholderia orbicola (strain AU 1054) protein is Protein-glutamate methylesterase/protein-glutamine glutaminase 3.